Consider the following 205-residue polypeptide: Thymidine kinase (205 aa).

Residues 9–16 and 87–90 contribute to the ATP site; these read SAMNAGKS and DECQ. Catalysis depends on Glu-88, which acts as the Proton acceptor. Residues Cys-145, Cys-147, Cys-182, and His-185 each contribute to the Zn(2+) site.

This sequence belongs to the thymidine kinase family. In terms of assembly, homotetramer.

The protein localises to the cytoplasm. The catalysed reaction is thymidine + ATP = dTMP + ADP + H(+). Allosteric enzyme which is feedback inhibited by dTTP and activated by a number of dNDP and dNTP. Functionally, phosphorylates both thymidine and deoxyuridine. The protein is Thymidine kinase of Escherichia coli O157:H7.